The following is a 323-amino-acid chain: Methenyltetrahydromethanopterin cyclohydrolase (323 aa).

It belongs to the MCH family.

It localises to the cytoplasm. The enzyme catalyses 5,10-methenyl-5,6,7,8-tetrahydromethanopterin + H2O = N(5)-formyl-5,6,7,8-tetrahydromethanopterin + H(+). Its pathway is one-carbon metabolism; methanogenesis from CO(2); 5,10-methenyl-5,6,7,8-tetrahydromethanopterin from CO(2): step 3/3. Functionally, catalyzes the reversible interconversion of 5-formyl-H(4)MPT to methenyl-H(4)MPT(+). In Methanococcus vannielii (strain ATCC 35089 / DSM 1224 / JCM 13029 / OCM 148 / SB), this protein is Methenyltetrahydromethanopterin cyclohydrolase.